Here is a 207-residue protein sequence, read N- to C-terminus: Serotonin N-acetyltransferase (207 aa).

Threonine 31 is subject to Phosphothreonine; by PKA. An N-acetyltransferase domain is found at 35–194; it reads SEFRCLTPQD…SLTFMELQCS (160 aa). Residue leucine 124 coordinates substrate. Acetyl-CoA-binding positions include 124-126 and 132-137; these read LAV and QQGKGS. Methionine 159 serves as a coordination point for substrate. 168–170 contacts acetyl-CoA; sequence YEK. At serine 205 the chain carries Phosphoserine.

It belongs to the acetyltransferase family. AANAT subfamily. Monomer. Interacts with several 14-3-3 proteins, including YWHAB, YWHAE, YWHAG and YWHAZ, preferentially when phosphorylated at Thr-31. Phosphorylation on Ser-205 also allows binding to YWHAZ, but with lower affinity. The interaction with YWHAZ considerably increases affinity for arylalkylamines and acetyl-CoA and protects the enzyme from dephosphorylation and proteasomal degradation. It may also prevent thiol-dependent inactivation. In terms of processing, cAMP-dependent phosphorylation on both N-terminal Thr-31 and C-terminal Ser-205 regulates AANAT activity by promoting interaction with 14-3-3 proteins. In terms of tissue distribution, highly expressed in pineal gland and retina. Also detected in heart and intestine.

It localises to the cytoplasm. It catalyses the reaction a 2-arylethylamine + acetyl-CoA = an N-acetyl-2-arylethylamine + CoA + H(+). The protein operates within aromatic compound metabolism; melatonin biosynthesis; melatonin from serotonin: step 1/2. Functionally, controls the night/day rhythm of melatonin production in the pineal gland. Catalyzes the N-acetylation of serotonin into N-acetylserotonin, the penultimate step in the synthesis of melatonin. This chain is Serotonin N-acetyltransferase (AANAT), found in Mesocricetus auratus (Golden hamster).